Consider the following 186-residue polypeptide: Biphenyl dioxygenase subunit beta (186 aa).

It belongs to the bacterial ring-hydroxylating dioxygenase beta subunit family. As to quaternary structure, heterohexamer consisting of 3 BphA subunits and 3 BphE subunits. A ferredoxin (BphF) and a ferredoxin reductase (BphG) must be present to obtain activity.

The enzyme catalyses biphenyl + NADH + O2 + H(+) = (2R,3S)-3-phenylcyclohexa-3,5-diene-1,2-diol + NAD(+). It participates in xenobiotic degradation; biphenyl degradation; 2-hydroxy-2,4-pentadienoate and benzoate from biphenyl: step 1/4. In terms of biological role, the beta subunit may be responsible for the substrate specificity of the enzyme. The sequence is that of Biphenyl dioxygenase subunit beta (bphE) from Comamonas testosteroni (Pseudomonas testosteroni).